A 73-amino-acid chain; its full sequence is Putative defensin-like protein 277 (73 aa).

Positions Met-1 to Ala-24 are cleaved as a signal peptide. Disulfide bonds link Cys-27-Cys-64, Cys-33-Cys-52, Cys-39-Cys-62, and Cys-43-Cys-63.

Belongs to the DEFL family.

It is found in the secreted. This is Putative defensin-like protein 277 from Arabidopsis thaliana (Mouse-ear cress).